The primary structure comprises 218 residues: Ribose-5-phosphate isomerase A (218 aa).

Substrate-binding positions include 28-31 (TGST), 81-84 (DGAD), and 94-97 (KGGG). E103 acts as the Proton acceptor in catalysis. K121 is a substrate binding site.

Belongs to the ribose 5-phosphate isomerase family. In terms of assembly, homodimer.

The catalysed reaction is aldehydo-D-ribose 5-phosphate = D-ribulose 5-phosphate. It functions in the pathway carbohydrate degradation; pentose phosphate pathway; D-ribose 5-phosphate from D-ribulose 5-phosphate (non-oxidative stage): step 1/1. Catalyzes the reversible conversion of ribose-5-phosphate to ribulose 5-phosphate. This chain is Ribose-5-phosphate isomerase A, found in Pseudoalteromonas atlantica (strain T6c / ATCC BAA-1087).